Reading from the N-terminus, the 57-residue chain is DNA gyrase inhibitor YacG (57 aa).

Positions 10, 13, 25, and 29 each coordinate Zn(2+).

This sequence belongs to the DNA gyrase inhibitor YacG family. As to quaternary structure, interacts with GyrB. Zn(2+) serves as cofactor.

Its function is as follows. Inhibits all the catalytic activities of DNA gyrase by preventing its interaction with DNA. Acts by binding directly to the C-terminal domain of GyrB, which probably disrupts DNA binding by the gyrase. This chain is DNA gyrase inhibitor YacG, found in Brucella abortus (strain 2308).